Consider the following 884-residue polypeptide: MAENALPKGYEPRDVEERWRRHWEDNRTFTPDMDAPGEPYSIVIPPPNVTGALHIGHALNHVLIDVLCRNARQQGKKVLWLPGTDHAGIATQNVVERALAKEGLSRHDLGREAFIERVWQWKEEYGNRILNQIRMLGDSVDWTRERFTMDEGLSKAVRKVFVDLYNGGYIYRGNYIINWCNRCHTALADDEVDHMPEQGHLYHVRYDFEDGSGSVVIATTRPETIMADTGVCVHPEDERYAGLIGKKILVPVIGRAVPLFADTYVDREFGTGALKVTPCHDPNDWTLGERHGLAFIQCIDEDGNMTAEAGPYAGLTKEECRKRIVADLEASGQLVRVEELNHSVGHCYRCKTVVEPHMSEQWFVASTKLAPRARAAVPQMTQIFPESWMKTYFNWLDNIRDWCISRQIWWGHRIPAWTCGKCGKLIVSEQDPTACPDCGCTDLTQDPDVLDTWFSSALWPFSTMGWPDKTKDLATFYPTSVLVTGFDILFFWVARMMMLGMHFMDEVPFKHVYLHALVRDGEGRKMSKSTGNVIDPLAMIDKYGTDSLRFTLAAFAAMGRDIKLSEDRIEGYRHFVNKVWNAARFSLMNLPEEAPAALDLDNVKGMHHKWILHRLEELKASQAAGIDGYRFNEVAQGLYRFWWNEFCDWYLELIKPDMQAGGERQATAQYVLWTVLREALLLLHPFMPFVTAEVWQALPGHAGDDIATKLYPAARPGCRDVKDAEHMELVQATISAVRTIRAELNIAPSYRLTTLVRPASAEDAATLEEGREMLMTLARLDGLTVAVDVEAPKASASSVVAGNEVIVPLTGAVDFEAELARLDKELGKIEKDFVQVNKKLANESFVSKAPADVVAKERARAEELSDAKAKLEALQQRFRDAIGK.

The 'HIGH' region signature appears at 47-57 (PNVTGALHIGH). A 'KMSKS' region motif is present at residues 525–529 (KMSKS). An ATP-binding site is contributed by Lys528. Positions 812 to 884 (AVDFEAELAR…QQRFRDAIGK (73 aa)) form a coiled coil.

It belongs to the class-I aminoacyl-tRNA synthetase family. ValS type 1 subfamily. Monomer.

It is found in the cytoplasm. It carries out the reaction tRNA(Val) + L-valine + ATP = L-valyl-tRNA(Val) + AMP + diphosphate. Catalyzes the attachment of valine to tRNA(Val). As ValRS can inadvertently accommodate and process structurally similar amino acids such as threonine, to avoid such errors, it has a 'posttransfer' editing activity that hydrolyzes mischarged Thr-tRNA(Val) in a tRNA-dependent manner. The polypeptide is Valine--tRNA ligase (Nitratidesulfovibrio vulgaris (strain ATCC 29579 / DSM 644 / CCUG 34227 / NCIMB 8303 / VKM B-1760 / Hildenborough) (Desulfovibrio vulgaris)).